Reading from the N-terminus, the 406-residue chain is Ubiquitin-like modifier-activating enzyme 5 (406 aa).

Residues glycine 82, aspartate 103, lysine 126, asparagine 149, and asparagine 183 each contribute to the ATP site. Residues cysteine 225 and cysteine 228 each contribute to the Zn(2+) site. The active-site Glycyl thioester intermediate is the cysteine 249. Zn(2+) contacts are provided by cysteine 302 and cysteine 307. Positions 373 to 397 are disordered; it reads EAPSKSTETTSEATTTTTGDETSLD. Residues 378–393 are compositionally biased toward low complexity; that stretch reads STETTSEATTTTTGDE.

This sequence belongs to the ubiquitin-activating E1 family. UBA5 subfamily.

E1-like enzyme which activates UFM1. This is Ubiquitin-like modifier-activating enzyme 5 from Drosophila willistoni (Fruit fly).